The primary structure comprises 205 residues: ATP synthase subunit b (205 aa).

Residues Phe51–Leu69 form a helical membrane-spanning segment.

This sequence belongs to the ATPase B chain family. As to quaternary structure, F-type ATPases have 2 components, F(1) - the catalytic core - and F(0) - the membrane proton channel. F(1) has five subunits: alpha(3), beta(3), gamma(1), delta(1), epsilon(1). F(0) has three main subunits: a(1), b(2) and c(10-14). The alpha and beta chains form an alternating ring which encloses part of the gamma chain. F(1) is attached to F(0) by a central stalk formed by the gamma and epsilon chains, while a peripheral stalk is formed by the delta and b chains.

The protein resides in the cell inner membrane. Its function is as follows. F(1)F(0) ATP synthase produces ATP from ADP in the presence of a proton or sodium gradient. F-type ATPases consist of two structural domains, F(1) containing the extramembraneous catalytic core and F(0) containing the membrane proton channel, linked together by a central stalk and a peripheral stalk. During catalysis, ATP synthesis in the catalytic domain of F(1) is coupled via a rotary mechanism of the central stalk subunits to proton translocation. In terms of biological role, component of the F(0) channel, it forms part of the peripheral stalk, linking F(1) to F(0). The protein is ATP synthase subunit b of Geotalea uraniireducens (strain Rf4) (Geobacter uraniireducens).